The chain runs to 99 residues: DNA-binding protein Fis (99 aa).

The segment at residues Gln-75–Lys-94 is a DNA-binding region (H-T-H motif).

This sequence belongs to the transcriptional regulatory Fis family. In terms of assembly, homodimer.

In terms of biological role, activates ribosomal RNA transcription. Plays a direct role in upstream activation of rRNA promoters. The protein is DNA-binding protein Fis of Tolumonas auensis (strain DSM 9187 / NBRC 110442 / TA 4).